A 213-amino-acid chain; its full sequence is Cell division protein SepF (213 aa).

Positions 27 to 103 are disordered; it reads VDAPAPRRAP…GSLRGSAPTR (77 aa). Composition is skewed to basic and acidic residues over residues 35–51 and 72–90; these read APVE…RFAD and DEDR…DRPA.

This sequence belongs to the SepF family. Homodimer. Interacts with FtsZ.

The protein localises to the cytoplasm. Functionally, cell division protein that is part of the divisome complex and is recruited early to the Z-ring. Probably stimulates Z-ring formation, perhaps through the cross-linking of FtsZ protofilaments. Its function overlaps with FtsA. The protein is Cell division protein SepF of Mycobacteroides abscessus (strain ATCC 19977 / DSM 44196 / CCUG 20993 / CIP 104536 / JCM 13569 / NCTC 13031 / TMC 1543 / L948) (Mycobacterium abscessus).